The primary structure comprises 1207 residues: AP-3 complex subunit delta-1 (1207 aa).

A2 is modified (N-acetylalanine). 9 HEAT repeats span residues 34–71 (KYIS…LGYD), 142–179 (DLAR…KYPE), 180–216 (SLRP…RNPK), 218–254 (YLSL…LEPR), 257–296 (KKLI…GMPN), 298–336 (SASI…THPK), 337–373 (SVQA…KKNL), 375–409 (EIVK…QSNY), and 521–558 (VYVQ…ERLP). Disordered stretches follow at residues 630–695 (PLSD…RYQD) and 731–970 (RRHR…EEPL). Residues S632, S634, and S636 each carry the phosphoserine modification. Basic and acidic residues predominate over residues 648–675 (EEQRHTKPRAPEADEQELARRREARRQE). Residues 659–679 (EADEQELARRREARRQEQANN) adopt a coiled-coil conformation. S688 carries the post-translational modification Phosphoserine. Residues 725-752 (VKLEEERRHRQRLEKDKRKKKKRERERR) are a coiled coil. Residues 731–740 (RRHRQRLEKD) show a composition bias toward basic and acidic residues. The segment covering 741–759 (KRKKKKRERERRGTRRHSS) has biased composition (basic residues). 2 positions are modified to phosphoserine: S758 and S759. T762 is modified (phosphothreonine). Residues S764, S788, and S829 each carry the phosphoserine modification. Residues 777–794 (VTEEMPENALPSDEDDKD) show a composition bias toward acidic residues. Residues 795 to 840 (PNDPYRALDIDLDKPLADSEKLPVQKHRNAETSKSPEKEDVPLVEK) are compositionally biased toward basic and acidic residues. Positions 841–854 (KSKKPKKKEKKHKE) are enriched in basic residues. A coiled-coil region spans residues 846-870 (KKKEKKHKEKEREKKKKEVEKGEDL). 2 stretches are compositionally biased toward basic and acidic residues: residues 855 to 869 (KERE…KGED) and 899 to 908 (EGQEEPRGEE). The span at 923-933 (PSKHKKKKHKK) shows a compositional bias: basic residues. The span at 952-969 (ADEEAAEPVENGTLEEEP) shows a compositional bias: acidic residues.

It belongs to the adaptor complexes large subunit family. In terms of assembly, AP-3 associates with the BLOC-1 complex. Adaptor protein complex 3 (AP-3) is a heterotetramer composed of two large adaptins (delta-type subunit AP3D1 and beta-type subunit AP3B1 or AP3B2), a medium adaptin (mu-type subunit AP3M1 or AP3M2) and a small adaptin (sigma-type subunit APS1 or AP3S2). Interacts with SLC30A2. Interacts with CLN3 (via dileucine motif); this interaction facilitates lysosomal targeting.

The protein resides in the cytoplasm. Its subcellular location is the golgi apparatus membrane. Its function is as follows. Part of the AP-3 complex, an adaptor-related complex which is not clathrin-associated. The complex is associated with the Golgi region as well as more peripheral structures. It facilitates the budding of vesicles from the Golgi membrane and may be directly involved in trafficking to lysosomes. Involved in process of CD8+ T-cell and NK cell degranulation. In concert with the BLOC-1 complex, AP-3 is required to target cargos into vesicles assembled at cell bodies for delivery into neurites and nerve terminals. This Bos taurus (Bovine) protein is AP-3 complex subunit delta-1 (AP3D1).